The chain runs to 391 residues: Pyoverdine export membrane fusion protein PvdR (391 aa).

The signal sequence occupies residues 1–24; that stretch reads MRRTRSTRRALLVAVCLSPLIALA. Positions 108–180 form a coiled coil; the sequence is IEMLKAQLAE…QASLRSDEAE (73 aa). The interval 263 to 289 is disordered; the sequence is LPVPPKPLDQSNQGGGSPTSGSGGQSG. A compositionally biased stretch (gly residues) spans 275 to 289; it reads QGGGSPTSGSGGQSG.

Belongs to the membrane fusion protein (MFP) (TC 8.A.1) family. As to quaternary structure, part of the tripartite efflux system PvdRT-OpmQ, which is composed of an inner membrane component with both ATPase and permease domains, PvdT, a periplasmic membrane fusion protein, PvdR, and an outer membrane component, OpmQ.

The protein localises to the periplasm. Its function is as follows. Part of the tripartite efflux system PvdRT-OpmQ required for the secretion into the extracellular milieu of the siderophore pyoverdine (PVD), which is involved in iron acquisition. This subunit is an adapter protein that stimulates the ATPase activity of PvdT and connects the inner and outer membrane components. The system is responsible for export of newly synthesized PVD after the final steps of biosynthesis have taken place in the periplasm. It is also responsible for recycling of PVD after internalization of ferri-PVD into the periplasm by the outer-membrane receptor FpvA and release of iron from PVD, thus making PVD available for new cycles of iron uptake. In addition, can expel unwanted metals complexed with PVD from the periplasm into the extracellular medium. Does not contribute to resistance to antibiotics belonging to the classes of tetracyclines, aminoglycosides, beta-lactams and macrolides, and chloramphenicol. This is Pyoverdine export membrane fusion protein PvdR from Pseudomonas aeruginosa (strain ATCC 15692 / DSM 22644 / CIP 104116 / JCM 14847 / LMG 12228 / 1C / PRS 101 / PAO1).